The sequence spans 189 residues: CASP-like protein 1F2 (189 aa).

At 1 to 27 (MESLEVANGKSSALGVSREASSPPQMG) the chain is on the cytoplasmic side. Residues 28–48 (FFIAQVVLRFFTLAFTGAAIA) form a helical membrane-spanning segment. At 49 to 77 (VMVTAKETVEVFSISFTVRYSYLSAFKFL) the chain is on the extracellular side. Residues 78–98 (VGADAVVCGFSMLSLIFVSIF) form a helical membrane-spanning segment. Over 99-113 (NKGKSNHYFFLYFHD) the chain is Cytoplasmic. Residues 114-134 (LILMVLSMSACAAATAVGYVG) traverse the membrane as a helical segment. Residues 135–156 (RYGQDKAAWMAVCGNVKMFCDK) lie on the Extracellular side of the membrane. A helical transmembrane segment spans residues 157–177 (ALASILLSLIGFICLFLLTIM). Topologically, residues 178–189 (AARNLRVSGHLI) are cytoplasmic.

Belongs to the Casparian strip membrane proteins (CASP) family. As to quaternary structure, homodimer and heterodimers.

The protein localises to the cell membrane. The sequence is that of CASP-like protein 1F2 from Vitis vinifera (Grape).